The sequence spans 532 residues: Zinc finger protein ZIC 2 (532 aa).

Positions 100 to 255 (PHAAHVGSYS…YMRQQCIKQE (156 aa)) are necessary for interaction with MDFIC and transcriptional activation or repression. A phosphoserine mark is found at Ser191 and Ser199. Lys253 is covalently cross-linked (Glycyl lysine isopeptide (Lys-Gly) (interchain with G-Cter in SUMO2)). Residues 256-291 (LICKWIDPEQLSNPKKSCNKTFSTMHELVTHVSVEH) form a C2H2-type 1; atypical zinc finger. Residues 300–327 (HVCFWEECPREGKPFKAKYKLVNHIRVH) form a C2H2-type 2; atypical zinc finger. C2H2-type zinc fingers lie at residues 333–357 (FPCP…KRTH), 363–387 (FQCE…MHVH), and 393–415 (YLCK…MKVH). Disordered stretches follow at residues 406–452 (SSLR…SSSN) and 475–532 (HRGG…EWYV). Positions 417–435 (SSPQGSESSPAASSGYESS) are enriched in low complexity. Gly residues predominate over residues 476 to 521 (RGGGSGSGGAGGGSGGGSGSGGGGGGAGGGGGGSSGGGSGTAGGHS). Residues 523–532 (LSSNFNEWYV) are compositionally biased toward polar residues.

Belongs to the GLI C2H2-type zinc-finger protein family. Interacts with RNF180. Interacts (via the C2H2-type domains 3, 4 and 5) with MDFIC (via the C2H2-type domains 3, 4 and 5); the interaction reduces its transcriptional activity. Interacts with GLI1 and GLI2. Interacts (via C2H2-type domain 3) with DHX9. Post-translationally, phosphorylated. In terms of processing, ubiquitinated by RNF180, leading to its degradation.

Its subcellular location is the nucleus. The protein resides in the cytoplasm. Acts as a transcriptional activator or repressor. Plays important roles in the early stage of organogenesis of the CNS. Activates the transcription of the serotonin transporter SERT in uncrossed ipsilateral retinal ganglion cells (iRGCs) to refine eye-specific projections in primary visual targets. Its transcriptional activity is repressed by MDFIC. Involved in the formation of the ipsilateral retinal projection at the optic chiasm midline. Drives the expression of EPHB1 on ipsilaterally projecting growth cones. Binds to the minimal GLI-consensus sequence 5'-TGGGTGGTC-3'. Associates to the basal SERT promoter region from ventrotemporal retinal segments of retinal embryos. The chain is Zinc finger protein ZIC 2 (ZIC2) from Homo sapiens (Human).